The primary structure comprises 237 residues: MSQPIYKRILLKLSGEALQGEDGLGIDPAILDRMAVEIKELVEMGVEVGVVLGGGNLFRGAKLAKAGMNRVVGDHMGMLATVMNGLAMRDSLFRADVNAKLMSAFQLNGICDTYNWSEAIKMLREKRVVIFSAGTGNPFFTTDSTACLRGIEIEADVVLKATKVDGVYDCDPAKNPDAKLYKNLAYAEVIDKELQVMDLSAFTLARDHGMPIRVFNMGKPGALRQVVTGTEEGTTIC.

Residue 12 to 15 coordinates ATP; the sequence is KLSG. Residues 20–25 are involved in allosteric activation by GTP; it reads GEDGLG. Glycine 54 contributes to the UMP binding site. Residues glycine 55 and arginine 59 each coordinate ATP. Residues aspartate 74 and 135 to 142 contribute to the UMP site; that span reads TGNPFFTT. Positions 162, 168, and 171 each coordinate ATP.

This sequence belongs to the UMP kinase family. As to quaternary structure, homohexamer.

Its subcellular location is the cytoplasm. The catalysed reaction is UMP + ATP = UDP + ADP. It participates in pyrimidine metabolism; CTP biosynthesis via de novo pathway; UDP from UMP (UMPK route): step 1/1. Allosterically activated by GTP. Inhibited by UTP. Catalyzes the reversible phosphorylation of UMP to UDP. The polypeptide is Uridylate kinase (Haemophilus influenzae (strain PittEE)).